The primary structure comprises 382 residues: Protein phosphatase 1A (382 aa).

A lipid anchor (N-myristoyl glycine) is attached at G2. One can recognise a PPM-type phosphatase domain in the interval R23–F291. The Mn(2+) site is built by D60, G61, D239, and D282. Residues S375 and S377 each carry the phosphoserine modification.

Belongs to the PP2C family. In terms of assembly, monomer. Interacts with SMAD2; the interaction dephosphorylates SMAD2 in its C-terminal SXS motif resulting in disruption of the SMAD2/SMAD4 complex, SMAD2 nuclear export and termination of the TGF-beta-mediated signaling. Interacts with SMAD2; the interaction dephosphorylates SMAD2 in its C-terminal SXS motif resulting in disruption of the SMAD2/SMAD4 complex, SMAD2 nuclear export and termination of the TGF-beta-mediated signaling. Interacts with the phosphorylated form of IKBKB/IKKB. It depends on Mg(2+) as a cofactor. Mn(2+) is required as a cofactor. Post-translationally, N-myristoylation is essential for the recognition of its substrates for dephosphorylation.

It is found in the nucleus. The protein localises to the cytoplasm. Its subcellular location is the cytosol. It localises to the membrane. It catalyses the reaction O-phospho-L-seryl-[protein] + H2O = L-seryl-[protein] + phosphate. It carries out the reaction O-phospho-L-threonyl-[protein] + H2O = L-threonyl-[protein] + phosphate. Enzyme with a broad specificity. Negatively regulates TGF-beta signaling through dephosphorylating SMAD2 and SMAD3, resulting in their dissociation from SMAD4, nuclear export of the SMADs and termination of the TGF-beta-mediated signaling. Dephosphorylates PRKAA1 and PRKAA2. Plays an important role in the termination of TNF-alpha-mediated NF-kappa-B activation through dephosphorylating and inactivating IKBKB/IKKB. In Oryctolagus cuniculus (Rabbit), this protein is Protein phosphatase 1A (PPM1A).